A 476-amino-acid polypeptide reads, in one-letter code: Oogenesin-2 (476 aa).

An LRR 1; degenerate repeat occupies 97 to 121; it reads RCKLREITLSHDLVVVWAGSHEVEG. The LRR 2; degenerate repeat unit spans residues 176–200; sequence HLHCRKLKIYGLTKAAVIEMFKIVH. Residues 201–226 form an LRR 3; degenerate repeat; that stretch reads AEYIEDLELSCLCLEYLDFLNPYLKQ. The LRR 4; degenerate repeat unit spans residues 227 to 264; that stretch reads MSNLLSLTLDEIIYTLNIDDYRNLNEEKVITVISHLPT. LRR repeat units follow at residues 265–285, 286–317, 342–369, and 370–394; these read FHHL…LRCL, KKPL…FELR, RHTL…ALSQ, and CYQL…LLHH.

It belongs to the PRAME family. As to expression, expressed in ovary, specifically in oocytes. Detected in follicles with two layers of granulosa cells, and are present in early as well as large antral follicles.

This chain is Oogenesin-2, found in Mus musculus (Mouse).